A 398-amino-acid chain; its full sequence is Succinate--CoA ligase [ADP-forming] subunit beta (398 aa).

Residues 9-253 (KELLKSYGVA…EAEEDPKELE (245 aa)) form the ATP-grasp domain. ATP is bound by residues Lys-46, 53 to 55 (GRG), Glu-108, Cys-111, and Glu-116. Residues Asn-208 and Asp-222 each contribute to the Mg(2+) site. Residues Asn-273 and 330 to 332 (GIM) each bind substrate.

This sequence belongs to the succinate/malate CoA ligase beta subunit family. In terms of assembly, heterotetramer of two alpha and two beta subunits. Requires Mg(2+) as cofactor.

The enzyme catalyses succinate + ATP + CoA = succinyl-CoA + ADP + phosphate. It catalyses the reaction GTP + succinate + CoA = succinyl-CoA + GDP + phosphate. Its pathway is carbohydrate metabolism; tricarboxylic acid cycle; succinate from succinyl-CoA (ligase route): step 1/1. Succinyl-CoA synthetase functions in the citric acid cycle (TCA), coupling the hydrolysis of succinyl-CoA to the synthesis of either ATP or GTP and thus represents the only step of substrate-level phosphorylation in the TCA. The beta subunit provides nucleotide specificity of the enzyme and binds the substrate succinate, while the binding sites for coenzyme A and phosphate are found in the alpha subunit. This Acidiphilium cryptum (strain JF-5) protein is Succinate--CoA ligase [ADP-forming] subunit beta.